A 333-amino-acid polypeptide reads, in one-letter code: Methionine import ATP-binding protein MetN 1 (333 aa).

The ABC transporter domain occupies 2–241; it reads ITFEGVEKVY…PETETAKSFV (240 aa). 38–45 provides a ligand contact to ATP; that stretch reads GFSGAGKS.

It belongs to the ABC transporter superfamily. Methionine importer (TC 3.A.1.24) family. As to quaternary structure, the complex is composed of two ATP-binding proteins (MetN), two transmembrane proteins (MetI) and a solute-binding protein (MetQ).

The protein localises to the cell membrane. The enzyme catalyses L-methionine(out) + ATP + H2O = L-methionine(in) + ADP + phosphate + H(+). The catalysed reaction is D-methionine(out) + ATP + H2O = D-methionine(in) + ADP + phosphate + H(+). Its function is as follows. Part of the ABC transporter complex MetNIQ involved in methionine import. Responsible for energy coupling to the transport system. The polypeptide is Methionine import ATP-binding protein MetN 1 (Bacillus licheniformis (strain ATCC 14580 / DSM 13 / JCM 2505 / CCUG 7422 / NBRC 12200 / NCIMB 9375 / NCTC 10341 / NRRL NRS-1264 / Gibson 46)).